A 774-amino-acid chain; its full sequence is Ion-translocating oxidoreductase complex subunit C (774 aa).

4Fe-4S ferredoxin-type domains lie at 369-397 and 407-436; these read GEPQ…QQLY and KATT…VQYF. Residues cysteine 377, cysteine 380, cysteine 383, cysteine 387, cysteine 416, cysteine 419, cysteine 422, and cysteine 426 each coordinate [4Fe-4S] cluster. The interval 602-750 is disordered; sequence KLEQQQANAE…EPEEQIDPRK (149 aa).

It belongs to the 4Fe4S bacterial-type ferredoxin family. RnfC subfamily. The complex is composed of six subunits: RsxA, RsxB, RsxC, RsxD, RsxE and RsxG. [4Fe-4S] cluster serves as cofactor.

It is found in the cell inner membrane. Functionally, part of a membrane-bound complex that couples electron transfer with translocation of ions across the membrane. Required to maintain the reduced state of SoxR. This is Ion-translocating oxidoreductase complex subunit C from Escherichia coli O6:K15:H31 (strain 536 / UPEC).